A 348-amino-acid chain; its full sequence is MCEGPSRISGPIPPDPTLCPDYYRRPSSAQGRLEGNALKLDLLTPDTDRDLDATPPRAPRIRPGGLEILERGRRGVGGVLLQLGGISLGPGASPKRKDPKDHEKENMRRIREIQRRFREQEHSREQGQSRPLKALWRSPKYDKVESRVKAQLQEPGPASGTEPAHFLRAHSRCGPGLPPPRVPSPQLTLPGPSAKAPGPGVDFITHNARTAKRAPRRHSRSLQVLAQVLEQQQQAQEHYNATQKGHVPQYLLERRDLWRREAEARQHSQPDPAMPPGHTRMPENQRLETLSSLLQSQSQLLRELVLLPAGADSLRAQSHRAELDRKLVQVEEAIKIFSRPKVFVKMDS.

Disordered regions lie at residues 1–65 (MCEG…RPGG), 84–195 (GGIS…PSAK), and 262–282 (AEAR…TRMP). Ser-93 is subject to Phosphoserine. Positions 95 to 127 (KRKDPKDHEKENMRRIREIQRRFREQEHSREQG) are enriched in basic and acidic residues. Position 138 is a phosphoserine (Ser-138). Residues 139–148 (PKYDKVESRV) show a composition bias toward basic and acidic residues. The region spanning 253–345 (ERRDLWRREA…IFSRPKVFVK (93 aa)) is the Enkurin domain.

Interacts with alpha-tubulin. Interacts (via central region) with CCP110 (via N-terminal region); competes with CEP97 for binding to CCP110.

It is found in the cytoplasm. Its subcellular location is the cytoskeleton. The protein resides in the microtubule organizing center. The protein localises to the centrosome. It localises to the centriole. It is found in the cilium basal body. Its subcellular location is the cell projection. The protein resides in the cilium. The protein localises to the spindle. It localises to the spindle pole. It is found in the cilium axoneme. Functionally, microtubule-binding protein which regulates microtubule organization and stability. Promotes the stability of astral microtubules and facilitates the proper orientation of the mitotic spindle. This allows the oriented division of basal keratinocytes and contributes to epidermal stratification. Required for the assembly of both primary and motile cilia. Destabilizes the interaction between CCP110 and CEP97 by competing with CEP97 for binding to CCP110 which promotes the removal of CCP110 and CEP97 from the mother centriole and allows the initiation of ciliogenesis. This chain is Enkurin domain-containing protein 1 (ENKD1), found in Bos taurus (Bovine).